The primary structure comprises 322 residues: Eukaryotic translation initiation factor 3 subunit I (322 aa).

WD repeat units follow at residues 4-43 (GHER…RLGT), 46-85 (GHQG…VIAS), 141-180 (MVES…KVVD), 184-223 (DHTA…CLKT), and 281-322 (GHFG…NIFE).

Belongs to the eIF-3 subunit I family. As to quaternary structure, component of the eukaryotic translation initiation factor 3 (eIF-3) complex. The eIF-3 complex interacts with pix.

The protein resides in the cytoplasm. Its function is as follows. Component of the eukaryotic translation initiation factor 3 (eIF-3) complex, which is involved in protein synthesis of a specialized repertoire of mRNAs and, together with other initiation factors, stimulates binding of mRNA and methionyl-tRNAi to the 40S ribosome. The eIF-3 complex specifically targets and initiates translation of a subset of mRNAs involved in cell proliferation. This Drosophila virilis (Fruit fly) protein is Eukaryotic translation initiation factor 3 subunit I.